A 241-amino-acid polypeptide reads, in one-letter code: Methylthioribulose-1-phosphate dehydratase (241 aa).

Position 96 (Cys-96) interacts with substrate. Zn(2+) contacts are provided by His-114 and His-116. The Proton donor/acceptor role is filled by Glu-138. His-194 serves as a coordination point for Zn(2+).

The protein belongs to the aldolase class II family. MtnB subfamily. It depends on Zn(2+) as a cofactor.

The protein localises to the cytoplasm. The catalysed reaction is 5-(methylsulfanyl)-D-ribulose 1-phosphate = 5-methylsulfanyl-2,3-dioxopentyl phosphate + H2O. Its pathway is amino-acid biosynthesis; L-methionine biosynthesis via salvage pathway; L-methionine from S-methyl-5-thio-alpha-D-ribose 1-phosphate: step 2/6. Catalyzes the dehydration of methylthioribulose-1-phosphate (MTRu-1-P) into 2,3-diketo-5-methylthiopentyl-1-phosphate (DK-MTP-1-P). Functions in the methionine salvage pathway. May play a role in apoptosis. The polypeptide is Methylthioribulose-1-phosphate dehydratase (Danio rerio (Zebrafish)).